The primary structure comprises 1798 residues: Non-reducing polyketide synthase nscA (1798 aa).

The segment at 25 to 256 (RRLDQHSKDR…PLPVYDGLCH (232 aa)) is N-terminal acylcarrier protein transacylase domain (SAT). In terms of domain architecture, Ketosynthase family 3 (KS3) spans 392–825 (SSKLAIVGMA…GGNTTLLLED (434 aa)). Residues 436 to 455 (NTHYDPTGKTENTTQTPYGN) are disordered. Residues 444-453 (KTENTTQTPY) show a composition bias toward polar residues. Active-site for beta-ketoacyl synthase activity residues include cysteine 565, histidine 700, and histidine 743. Positions 931–1230 (FTGQGAYYHG…PSASAMSSCR (300 aa)) are malonyl-CoA:ACP transacylase (MAT) domain. The tract at residues 1322-1458 (HQITAETVEA…AMIRFEDPVA (137 aa)) is N-terminal hotdog fold. The PKS/mFAS DH domain occupies 1322 to 1632 (HQITAETVEA…FRRVPRLLMD (311 aa)). Histidine 1354 functions as the Proton acceptor; for dehydratase activity in the catalytic mechanism. The tract at residues 1390 to 1628 (HMNLTDVEVL…GMIRFRRVPR (239 aa)) is product template (PT) domain. Residues 1486–1632 (ASRLSKPLAY…FRRVPRLLMD (147 aa)) are C-terminal hotdog fold. Catalysis depends on aspartate 1543, which acts as the Proton donor; for dehydratase activity. Residues 1685-1719 (MASKAPEPAPLLATSSESSTPKESPIVTPAESERA) are disordered. A compositionally biased stretch (low complexity) spans 1698-1709 (TSSESSTPKESP). The region spanning 1721–1798 (PVDNNMISQC…EMTAWIEEYC (78 aa)) is the Carrier domain. Serine 1758 is modified (O-(pantetheine 4'-phosphoryl)serine).

Pantetheine 4'-phosphate serves as cofactor.

Its pathway is secondary metabolite biosynthesis. Non-reducing polyketide synthase; part of the gene cluster that mediates the biosynthesis of neosartoricin B, a prenylated anthracenone that probably exhibits T-cell antiproliferative activity, suggestive of a physiological role as an immunosuppressive agent. The non-reducing polyketide synthase nscA probably synthesizes and cyclizes the decaketide backbone. The hydrolase nscB then mediates the product release through hydrolysis followed by spontaneous decarboxylation. The prenyltransferase nscD catalyzes the addition of the dimethylallyl group to the aromatic C5. The FAD-dependent monooxygenase nscC is then responsible for the stereospecific hydroxylation at C2. Neosartoricin B can be converted into two additional compounds neosartoricins C and D. Neosartoricin C is a spirocyclic compound that is cyclized through the attack of C3 hydroxyl on C14, followed by dehydration. On the other hand, neosartoricin D is a further cyclized compound in which attack of C2 on C14 in neosartoricin C results in the formation of the acetal-containing dioxabicyclo-octanone ring. Both of these compounds are novel and possibly represent related metabolites of the gene cluster. In Arthroderma benhamiae (strain ATCC MYA-4681 / CBS 112371) (Trichophyton mentagrophytes), this protein is Non-reducing polyketide synthase nscA.